A 335-amino-acid polypeptide reads, in one-letter code: UDP-N-acetylglucosamine--N-acetylmuramyl-(pentapeptide) pyrophosphoryl-undecaprenol N-acetylglucosamine transferase (335 aa).

Residues 9-11 (TGG), Asn-123, Ser-176, and Gln-274 each bind UDP-N-acetyl-alpha-D-glucosamine.

It belongs to the glycosyltransferase 28 family. MurG subfamily.

It localises to the cell inner membrane. It catalyses the reaction di-trans,octa-cis-undecaprenyl diphospho-N-acetyl-alpha-D-muramoyl-L-alanyl-D-glutamyl-meso-2,6-diaminopimeloyl-D-alanyl-D-alanine + UDP-N-acetyl-alpha-D-glucosamine = di-trans,octa-cis-undecaprenyl diphospho-[N-acetyl-alpha-D-glucosaminyl-(1-&gt;4)]-N-acetyl-alpha-D-muramoyl-L-alanyl-D-glutamyl-meso-2,6-diaminopimeloyl-D-alanyl-D-alanine + UDP + H(+). It functions in the pathway cell wall biogenesis; peptidoglycan biosynthesis. Functionally, cell wall formation. Catalyzes the transfer of a GlcNAc subunit on undecaprenyl-pyrophosphoryl-MurNAc-pentapeptide (lipid intermediate I) to form undecaprenyl-pyrophosphoryl-MurNAc-(pentapeptide)GlcNAc (lipid intermediate II). The chain is UDP-N-acetylglucosamine--N-acetylmuramyl-(pentapeptide) pyrophosphoryl-undecaprenol N-acetylglucosamine transferase from Campylobacter fetus subsp. fetus (strain 82-40).